An 84-amino-acid polypeptide reads, in one-letter code: ATP synthase subunit c (84 aa).

Helical transmembrane passes span 13-33 (IAVG…WGLI) and 56-76 (FIFA…GFWF).

The protein belongs to the ATPase C chain family. In terms of assembly, F-type ATPases have 2 components, F(1) - the catalytic core - and F(0) - the membrane proton channel. F(1) has five subunits: alpha(3), beta(3), gamma(1), delta(1), epsilon(1). F(0) has three main subunits: a(1), b(2) and c(10-14). The alpha and beta chains form an alternating ring which encloses part of the gamma chain. F(1) is attached to F(0) by a central stalk formed by the gamma and epsilon chains, while a peripheral stalk is formed by the delta and b chains.

It localises to the cell inner membrane. In terms of biological role, f(1)F(0) ATP synthase produces ATP from ADP in the presence of a proton or sodium gradient. F-type ATPases consist of two structural domains, F(1) containing the extramembraneous catalytic core and F(0) containing the membrane proton channel, linked together by a central stalk and a peripheral stalk. During catalysis, ATP synthesis in the catalytic domain of F(1) is coupled via a rotary mechanism of the central stalk subunits to proton translocation. Key component of the F(0) channel; it plays a direct role in translocation across the membrane. A homomeric c-ring of between 10-14 subunits forms the central stalk rotor element with the F(1) delta and epsilon subunits. In Acidithiobacillus ferrooxidans (strain ATCC 23270 / DSM 14882 / CIP 104768 / NCIMB 8455) (Ferrobacillus ferrooxidans (strain ATCC 23270)), this protein is ATP synthase subunit c.